A 203-amino-acid chain; its full sequence is Thymidylate kinase (203 aa).

Residue 14-21 (GGEGIGKS) participates in ATP binding.

This sequence belongs to the thymidylate kinase family.

It carries out the reaction dTMP + ATP = dTDP + ADP. Functionally, phosphorylation of dTMP to form dTDP in both de novo and salvage pathways of dTTP synthesis. The protein is Thymidylate kinase of Rickettsia conorii (strain ATCC VR-613 / Malish 7).